The chain runs to 185 residues: uncharacterized protein (185 aa).

Positions 1 to 29 (MKLFSRTSLVALGTAAAITLSGVTAPAFA) are cleaved as a signal peptide. The segment at 41-66 (KTAEDNTPEAPGASTPLKLEQPGTIT) is disordered.

Glycosylated; by Pmt.

The protein localises to the secreted. This is an uncharacterized protein from Corynebacterium glutamicum (strain ATCC 13032 / DSM 20300 / JCM 1318 / BCRC 11384 / CCUG 27702 / LMG 3730 / NBRC 12168 / NCIMB 10025 / NRRL B-2784 / 534).